The following is a 442-amino-acid chain: Putative FNIP repeat-containing protein L170 (442 aa).

3 FNIP repeats span residues 213 to 252 (FNSS…IGRG), 253 to 294 (FNSE…LGCF), and 295 to 348 (FNQS…FGMY).

In Acanthamoeba polyphaga mimivirus (APMV), this protein is Putative FNIP repeat-containing protein L170.